The primary structure comprises 376 residues: Probable transcription factor At1g61730 (376 aa).

A disordered region spans residues 1–150; that stretch reads MTKKLNPLED…RVKKDEESVK (150 aa). Residues 17–40 are compositionally biased toward acidic residues; the sequence is SDEDDVETSEAGEASDDSSSSEED. S49 carries the post-translational modification Phosphoserine. The span at 49–72 shows a compositional bias: low complexity; that stretch reads SPSATTAAAPPAKSTAVSTAADSD. The segment covering 73–83 has biased composition (acidic residues); sequence SGSETETDSDS. Residues 87-103 show a composition bias toward polar residues; sequence NPPNSGSGKTIALNTVN.

The protein belongs to the GeBP family. In terms of assembly, interacts with DEK3.

This is Probable transcription factor At1g61730 from Arabidopsis thaliana (Mouse-ear cress).